The chain runs to 442 residues: Meiosis-specific with OB domain-containing protein (442 aa).

The segment at residues 167–272 (IINVLAAVKS…EANILLNFIR (106 aa)) is a DNA-binding region (OB).

The protein belongs to the MEIOB family. In terms of assembly, component of a multiprotein complex with RPA2 and SPATA22. Interacts with SPATA22. Interacts with the complex BRME1:HSF2BP:BRCA2. In fetal gonads, specifically expressed in the ovary starting at the 14th weeks post fertilization. In the adult, restricted to testis.

Its subcellular location is the cytoplasm. It localises to the nucleus. The protein resides in the chromosome. Single-stranded DNA-binding protein required for homologous recombination in meiosis I. Required for double strand breaks (DSBs) repair and crossover formation and promotion of faithful and complete synapsis. Not required for the initial loading of recombinases but required to maintain a proper number of RAD51 and DMC1 foci after the zygotene stage. May act by ensuring the stabilization of recombinases, which is required for successful homology search and meiotic recombination. Displays Single-stranded DNA 3'-5' exonuclease activity in vitro. This Homo sapiens (Human) protein is Meiosis-specific with OB domain-containing protein.